We begin with the raw amino-acid sequence, 170 residues long: Lipocalin Cav p 2.0101 (170 aa).

Residues 1–16 (MMQILLLALAVSLACA) form the signal peptide. 2 disulfides stabilise this stretch: Cys-56-Cys-60 and Cys-75-Cys-168.

This sequence belongs to the calycin superfamily. Lipocalin family. Not N-linked glycosylated. Expressed in harderian gland (at protein level). Expressed in hair (at protein level). Expressed in submaxillary gland and harderian gland.

It is found in the secreted. This chain is Lipocalin Cav p 2.0101 (Lcncavp2), found in Cavia porcellus (Guinea pig).